The sequence spans 154 residues: Superoxide dismutase [Cu-Zn] (154 aa).

Cu cation is bound by residues histidine 47, histidine 49, and histidine 64. A disulfide bond links cysteine 58 and cysteine 147. Zn(2+) is bound by residues histidine 64, histidine 72, histidine 81, and aspartate 84. Histidine 121 is a binding site for Cu cation. Substrate is bound at residue arginine 144.

This sequence belongs to the Cu-Zn superoxide dismutase family. As to quaternary structure, homodimer. Cu cation serves as cofactor. The cofactor is Zn(2+).

It localises to the cytoplasm. It catalyses the reaction 2 superoxide + 2 H(+) = H2O2 + O2. In terms of biological role, destroys radicals which are normally produced within the cells and which are toxic to biological systems. This chain is Superoxide dismutase [Cu-Zn] (sodC), found in Aspergillus fumigatus (strain ATCC MYA-4609 / CBS 101355 / FGSC A1100 / Af293) (Neosartorya fumigata).